The chain runs to 242 residues: Murein peptide amidase A (242 aa).

A Peptidase M14 domain is found at 1-234; the sequence is MTVTRPRAER…FAMANLLRWH (234 aa). His49, Glu52, and His157 together coordinate Zn(2+). The Proton donor/acceptor role is filled by Glu210.

It belongs to the peptidase M14 family. In terms of assembly, homodimer. Zn(2+) serves as cofactor.

Its subcellular location is the cytoplasm. It catalyses the reaction L-alanyl-gamma-D-glutamyl-meso-2,6-diaminopimelate + H2O = L-alanyl-D-glutamate + meso-2,6-diaminopimelate. The protein operates within cell wall degradation; peptidoglycan degradation. Functionally, involved in muropeptide degradation. Catalyzes the hydrolysis of the gamma-D-glutamyl-diaminopimelic acid (gamma-D-Glu-Dap) amide bond in the murein tripeptide L-alanyl-gamma-D-glutamyl-meso-diaminopimelic acid, leading to the formation of L-Ala-gamma-D-Glu and Dap. The sequence is that of Murein peptide amidase A from Escherichia coli O157:H7.